Consider the following 477-residue polypeptide: Sulfate adenylyltransferase subunit 1 (477 aa).

A tr-type G domain is found at 22-239 (KDMLRFITCG…TVQISHDAPL (218 aa)). A G1 region spans residues 31-38 (GSVDDGKS). 31-38 (GSVDDGKS) contributes to the GTP binding site. Positions 89-93 (GITID) are G2. The G3 stretch occupies residues 110-113 (DCPG). Residues 110–114 (DCPGH) and 165–168 (NKMD) contribute to the GTP site. The G4 stretch occupies residues 165 to 168 (NKMD). Residues 202 to 204 (SAL) are G5.

Belongs to the TRAFAC class translation factor GTPase superfamily. Classic translation factor GTPase family. CysN/NodQ subfamily. Heterodimer composed of CysD, the smaller subunit, and CysN.

The enzyme catalyses sulfate + ATP + H(+) = adenosine 5'-phosphosulfate + diphosphate. It functions in the pathway sulfur metabolism; hydrogen sulfide biosynthesis; sulfite from sulfate: step 1/3. Functionally, with CysD forms the ATP sulfurylase (ATPS) that catalyzes the adenylation of sulfate producing adenosine 5'-phosphosulfate (APS) and diphosphate, the first enzymatic step in sulfur assimilation pathway. APS synthesis involves the formation of a high-energy phosphoric-sulfuric acid anhydride bond driven by GTP hydrolysis by CysN coupled to ATP hydrolysis by CysD. This is Sulfate adenylyltransferase subunit 1 from Chromobacterium violaceum (strain ATCC 12472 / DSM 30191 / JCM 1249 / CCUG 213 / NBRC 12614 / NCIMB 9131 / NCTC 9757 / MK).